An 83-amino-acid polypeptide reads, in one-letter code: Hepcidin (83 aa).

The N-terminal stretch at 1–23 (MALSTRTQAACLLLLLLASLSST) is a signal peptide. Residues 24–53 (TYLHQQMRQTTELQPLHGEESRADIAIPMQ) constitute a propeptide that is removed on maturation. 4 cysteine pairs are disulfide-bonded: Cys-65–Cys-81, Cys-68–Cys-71, Cys-69–Cys-77, and Cys-72–Cys-80.

Belongs to the hepcidin family. As to quaternary structure, interacts with SLC40A1; this interaction promotes SLC40A1 rapid ubiquitination. In terms of tissue distribution, highly expressed in the liver and to a much lesser extent in the heart. Secreted in blood.

It is found in the secreted. Functionally, liver-produced hormone that constitutes the main circulating regulator of iron absorption and distribution across tissues. Acts by promoting endocytosis and degradation of SLC40A1, leading to the retention of iron in iron-exporting cells and decreased flow of iron into plasma. Controls the major flows of iron into plasma: absorption of dietary iron in the intestine, recycling of iron by macrophages, which phagocytose old erythrocytes and other cells, and mobilization of stored iron from hepatocytes. The sequence is that of Hepcidin (Hamp) from Mus musculus (Mouse).